A 1530-amino-acid chain; its full sequence is Multidrug resistance-associated protein 1 (1530 aa).

Residues 1–33 (MALRDFCSVDGSDLFWEWNVTWNTSNPDFTKCF) are Extracellular-facing. Asparagine 19 carries N-linked (GlcNAc...) asparagine glycosylation. Residues 34–54 (QNTVLVWVPCSYLWVCFPFYF) traverse the membrane as a helical segment. Topologically, residues 55–74 (LYLSHHDRGYIQMTHLNKAK) are cytoplasmic. The chain crosses the membrane as a helical span at residues 75–95 (TALGFLLWIVCWADLFYSFWE). The Extracellular portion of the chain corresponds to 96-100 (RSMGK). A helical membrane pass occupies residues 101–121 (LLAPVFLVSPTLLGITMLLAT). Over 122-133 (FLIQIERRRGVQ) the chain is Cytoplasmic. A helical transmembrane segment spans residues 134-154 (SSGIMLTFWLIALLCALAILR). The Extracellular portion of the chain corresponds to 155-172 (SKIMTALKEDARVDVFRD). The chain crosses the membrane as a helical span at residues 173–193 (VTFYIYFSLVLIQLVLSCFSD). The Cytoplasmic segment spans residues 194 to 316 (RSPLFSETIN…KERDPSLFKV (123 aa)). Tyrosine 277 carries the post-translational modification Phosphotyrosine. Position 289 is a phosphoserine (serine 289). Residues 317 to 337 (LYKTFGPYFLMSFLFKAVHDL) form a helical membrane-spanning segment. The 284-residue stretch at 325 to 608 (FLMSFLFKAV…LPMVISSIVQ (284 aa)) folds into the ABC transmembrane type-1 1 domain. The Extracellular segment spans residues 338-363 (MMFAGPEILKLLINFVNDKKAPEWQG). The chain crosses the membrane as a helical span at residues 364 to 384 (YFYTALLFISACLQTLVLHQY). At 385–440 (FHICFVSGMRIKTAVIGAVYRKALVITNAARKSSTVGEIVNLMSVDAQRFMDLATY) the chain is on the cytoplasmic side. The chain crosses the membrane as a helical span at residues 441–461 (INMIWSAPLQVILALYLLWLN). At 462–464 (LGP) the chain is on the extracellular side. The chain crosses the membrane as a helical span at residues 465–485 (SVLAGVAVMVLMVPLNAVMAM). The Cytoplasmic segment spans residues 486–547 (KTKTYQVAHM…VLKKSAYLAA (62 aa)). Position 503 is an N6-succinyllysine (lysine 503). The helical transmembrane segment at 548 to 568 (VGTFTWVCTPFLVALSTFAVY) threads the bilayer. At 569 to 590 (VTVDENNILDAQKAFVSLALFN) the chain is on the extracellular side. A helical transmembrane segment spans residues 591-611 (ILRFPLNILPMVISSIVQASV). The Cytoplasmic portion of the chain corresponds to 612-966 (SLKRLRVFLS…VKLSVYWDYM (355 aa)). In terms of domain architecture, ABC transporter 1 spans 644–868 (ITVKNATFTW…DGAFAEFLRT (225 aa)). An ATP-binding site is contributed by 678–685 (GQVGCGKS). A disordered region spans residues 912–939 (RQLSSSSSYSRDVSQHHTSTAELRKPGP). Serine 915 and serine 930 each carry phosphoserine. Residues 967 to 987 (KAIGLFISFLSIFLFLCNHVA) traverse the membrane as a helical segment. Residues 974–1255 (SFLSIFLFLC…LVRMSSEMET (282 aa)) form the ABC transmembrane type-1 2 domain. Over 988-1024 (SLVSNYWLSLWTDDPIVNGTQEHTQVRLSVYGALGIS) the chain is Extracellular. An N-linked (GlcNAc...) asparagine glycan is attached at asparagine 1005. Residues 1025-1045 (QGITVFGYSMAVSIGGIFASR) traverse the membrane as a helical segment. At 1046–1088 (RLHLDLLHNVLRSPISFFERTPSGNLVNRFSKELDTVDSMIPQ) the chain is on the cytoplasmic side. Residues 1089–1109 (VIKMFMGSLFNVIGACIIILL) traverse the membrane as a helical segment. A topological domain (extracellular) is located at residue alanine 1110. A helical membrane pass occupies residues 1111-1131 (TPMAAVIIPPLGLIYFFVQRF). The Cytoplasmic portion of the chain corresponds to 1132–1202 (YVASSRQLKR…VANRWLAVRL (71 aa)). A helical transmembrane segment spans residues 1203–1223 (ECVGNCIVLFASLFAVISRHS). Topologically, residues 1224 to 1225 (LS) are extracellular. A helical transmembrane segment spans residues 1226 to 1246 (AGLVGLSVSYSLQVTTYLNWL). Topologically, residues 1247 to 1530 (VRMSSEMETN…YSMAKDSGLV (284 aa)) are cytoplasmic. Positions 1292 to 1526 (VEFRDYGLRY…RGLFYSMAKD (235 aa)) constitute an ABC transporter 2 domain. ATP is bound at residue 1326 to 1333 (GRTGAGKS).

The protein belongs to the ABC transporter superfamily. ABCC family. Conjugate transporter (TC 3.A.1.208) subfamily. Expressed in heart, spleen, lung, kidney, skeletal muscle, mammary gland and weaker in brain and liver.

The protein resides in the cell membrane. The protein localises to the basolateral cell membrane. The enzyme catalyses ATP + H2O + xenobioticSide 1 = ADP + phosphate + xenobioticSide 2.. The catalysed reaction is an S-substituted glutathione(in) + ATP + H2O = an S-substituted glutathione(out) + ADP + phosphate + H(+). It carries out the reaction sphing-4-enine 1-phosphate(in) + ATP + H2O = sphing-4-enine 1-phosphate(out) + ADP + phosphate + H(+). It catalyses the reaction leukotriene C4(in) + ATP + H2O = leukotriene C4(out) + ADP + phosphate + H(+). The enzyme catalyses 17beta-estradiol 17-O-(beta-D-glucuronate)(in) + ATP + H2O = 17beta-estradiol 17-O-(beta-D-glucuronate)(out) + ADP + phosphate + H(+). The catalysed reaction is daunorubicin(in) + ATP + H2O = daunorubicin(out) + ADP + phosphate + H(+). It carries out the reaction vincristine(in) + ATP + H2O = vincristine(out) + ADP + phosphate + H(+). It catalyses the reaction 2',3'-cGAMP(in) + ATP + H2O = 2',3'-cGAMP(out) + ADP + phosphate + H(+). The enzyme catalyses S-[(2E,6E,10E)-geranylgeranyl]-L-glutathione(in) + ATP + H2O = S-[(2E,6E,10E)-geranylgeranyl]-L-glutathione(out) + ADP + phosphate + H(+). The catalysed reaction is prostaglandin A2-S-(R)-glutathione(in) + ATP + H2O = prostaglandin A2-S-(R)-glutathione(out) + ADP + phosphate + H(+). It carries out the reaction prostaglandin A2-S-(S)-glutathione(in) + ATP + H2O = prostaglandin A2-S-(S)-glutathione(out) + ADP + phosphate + H(+). Its activity is regulated as follows. MK 571 inhibits sphingosine 1-phosphate and leukotriene C4 export. Mediates export of organic anions and drugs from the cytoplasm. Mediates ATP-dependent transport of glutathione and glutathione conjugates, leukotriene C4, estradiol-17-beta-o-glucuronide, methotrexate, antiviral drugs and other xenobiotics. Confers resistance to anticancer drugs by decreasing accumulation of drug in cells, and by mediating ATP- and GSH-dependent drug export. Hydrolyzes ATP with low efficiency. Catalyzes the export of sphingosine 1-phosphate from mast cells independently of their degranulation. Participates in inflammatory response by allowing export of leukotriene C4 from leukotriene C4-synthesizing cells. Mediates ATP-dependent, GSH-independent cyclic GMP-AMP (cGAMP) export. Thus, by limiting intracellular cGAMP concentrations negatively regulates the cGAS-STING pathway. Exports S-geranylgeranyl-glutathione (GGG) in lymphoid cells and stromal compartments of lymphoid organs. ABCC1 (via extracellular transport) with GGT5 (via GGG catabolism) establish GGG gradients within lymphoid tissues to position P2RY8-positive lymphocytes at germinal centers in lymphoid follicles and restrict their chemotactic transmigration from blood vessels to the bone marrow parenchyma. Mediates basolateral export of GSH-conjugated R- and S-prostaglandin A2 diastereomers in polarized epithelial cells. The polypeptide is Multidrug resistance-associated protein 1 (Bos taurus (Bovine)).